Reading from the N-terminus, the 208-residue chain is Small ribosomal subunit protein uS4 (208 aa).

Residues 31 to 51 (SALDKRAYGPGQHGQRRAKTS) form a disordered region. An S4 RNA-binding domain is found at 98–156 (RRLDNVVYRMGFATTRSSARQLVTHGHVLVDGKRLDIPSYFVRSGQKIEIKEKTKSNPQ).

This sequence belongs to the universal ribosomal protein uS4 family. In terms of assembly, part of the 30S ribosomal subunit. Contacts protein S5. The interaction surface between S4 and S5 is involved in control of translational fidelity.

One of the primary rRNA binding proteins, it binds directly to 16S rRNA where it nucleates assembly of the body of the 30S subunit. In terms of biological role, with S5 and S12 plays an important role in translational accuracy. This Helicobacter pylori (strain HPAG1) protein is Small ribosomal subunit protein uS4.